The chain runs to 161 residues: Glutaredoxin-2, mitochondrial (161 aa).

The N-terminal 19 residues, 1 to 19 (MLWRRAALAGTRLVWSRSG), are a transit peptide targeting the mitochondrion. Position 20 is a phosphoserine (serine 20). Residues 54 to 154 (VNQIQETISD…PLVHQCYLKK (101 aa)) enclose the Glutaredoxin domain. [2Fe-2S] cluster is bound at residue cysteine 65. Lysine 71 serves as a coordination point for glutathione. Cysteine 74 is modified (S-glutathionyl cysteine; alternate). A disulfide bond links cysteine 74 and cysteine 77. Residues glutamine 106 and valine 118 each contribute to the glutathione site. Residue cysteine 150 participates in [2Fe-2S] cluster binding.

The protein belongs to the glutaredoxin family. In terms of assembly, monomer; active form. Homodimer; inactive form. The homodimer is probably linked by 1 2Fe-2S cluster.

It localises to the mitochondrion. With respect to regulation, the 2Fe-2S present in the homodimer leads to inactivation of the enzyme. The 2Fe-2S may serve as a redox sensor: the presence of one-electron oxidants or reductants leading to the loss of the 2Fe-2S cluster, subsequent monomerization and activation of the enzyme. Its function is as follows. Glutathione-dependent oxidoreductase that facilitates the maintenance of mitochondrial redox homeostasis upon induction of apoptosis by oxidative stress. Involved in response to hydrogen peroxide and regulation of apoptosis caused by oxidative stress. Acts as a very efficient catalyst of monothiol reactions because of its high affinity for protein glutathione-mixed disulfides. Can receive electrons not only from glutathione (GSH), but also from thioredoxin reductase supporting both monothiol and dithiol reactions. Efficiently catalyzes both glutathionylation and deglutathionylation of mitochondrial complex I, which in turn regulates the superoxide production by the complex. Overexpression decreases the susceptibility to apoptosis and prevents loss of cardiolipin and cytochrome c release. The sequence is that of Glutaredoxin-2, mitochondrial (GLRX2) from Pongo abelii (Sumatran orangutan).